Reading from the N-terminus, the 277-residue chain is Large ribosomal subunit protein uL2c (277 aa).

The interval 30–60 is disordered; the sequence is RKKLTSGQHSGKGRNNRGIITSRHRGGGHKR. Positions 51-60 are enriched in basic residues; it reads SRHRGGGHKR.

It belongs to the universal ribosomal protein uL2 family. As to quaternary structure, part of the 50S ribosomal subunit.

It localises to the plastid. The protein localises to the chloroplast. This chain is Large ribosomal subunit protein uL2c (rpl2), found in Angiopteris evecta (Mule's foot fern).